The chain runs to 377 residues: Succinyl-diaminopimelate desuccinylase (377 aa).

H68 serves as a coordination point for Zn(2+). D70 is a catalytic residue. A Zn(2+)-binding site is contributed by D101. E135 acts as the Proton acceptor in catalysis. The Zn(2+) site is built by E136, E164, and H350.

It belongs to the peptidase M20A family. DapE subfamily. Homodimer. The cofactor is Zn(2+). It depends on Co(2+) as a cofactor.

The enzyme catalyses N-succinyl-(2S,6S)-2,6-diaminopimelate + H2O = (2S,6S)-2,6-diaminopimelate + succinate. Its pathway is amino-acid biosynthesis; L-lysine biosynthesis via DAP pathway; LL-2,6-diaminopimelate from (S)-tetrahydrodipicolinate (succinylase route): step 3/3. In terms of biological role, catalyzes the hydrolysis of N-succinyl-L,L-diaminopimelic acid (SDAP), forming succinate and LL-2,6-diaminopimelate (DAP), an intermediate involved in the bacterial biosynthesis of lysine and meso-diaminopimelic acid, an essential component of bacterial cell walls. The sequence is that of Succinyl-diaminopimelate desuccinylase from Psychromonas ingrahamii (strain DSM 17664 / CCUG 51855 / 37).